A 1651-amino-acid polypeptide reads, in one-letter code: Vitellogenin-6 (1651 aa).

The signal sequence occupies residues 1–15 (MKFFIALALLGAALA). Residues 34 to 716 (FRAGREYRYL…TTESVLPTEM (683 aa)) form the Vitellogenin domain. Residues Asn252 and Asn1288 are each glycosylated (N-linked (GlcNAc...) asparagine). A VWFD domain is found at 1340 to 1515 (ANCVVKSTKI…SYLYKDSKCN (176 aa)). 2 disulfide bridges follow: Cys1342-Cys1479 and Cys1364-Cys1514. A disordered region spans residues 1527–1556 (FQRIEKNQEEEKDQEMNYEESRREQDDEPT).

Synthesized in Caenorhabditis only by 32 cells building the intestine of adult hermaphroditic individuals; they are cotranslationally secreted into the body cavity and subsequently taken up by the gonad.

The protein localises to the secreted. Functionally, precursor of the egg-yolk proteins that are sources of nutrients during embryonic development. May play a role in cholesterol uptake. May be involved in thermotolerance. This is Vitellogenin-6 (vit-6) from Caenorhabditis elegans.